We begin with the raw amino-acid sequence, 916 residues long: Nonsense-mediated mRNA decay factor SMG8 (916 aa).

The segment at 566-626 is disordered; that stretch reads LENSNRTPDT…KNYASQGDAD (61 aa). Polar residues predominate over residues 589–604; sequence LSGSQKSQDSASNLTF.

This sequence belongs to the SMG8 family.

In terms of biological role, involved in nonsense-mediated decay (NMD) of mRNAs containing premature stop codons. Probable component of kinase complex containing SMG1 and recruited to stalled ribosomes. This is Nonsense-mediated mRNA decay factor SMG8 from Aedes aegypti (Yellowfever mosquito).